We begin with the raw amino-acid sequence, 178 residues long: PRA1 family protein 2 (178 aa).

Residues 1–41 (MSEVRLPPLRALDDFVLGSARLAAPDPGDPQRWCHRVINNL) lie on the Cytoplasmic side of the membrane. The helical transmembrane segment at 42–62 (LYYQTNYLLCFGISLALAGYI) threads the bilayer. At 63-64 (RP) the chain is on the extracellular side. A helical transmembrane segment spans residues 65-85 (LHTLLSALVVVVALGVLVWAA). The Cytoplasmic portion of the chain corresponds to 86-96 (ETRAAVRRCRR). A helical membrane pass occupies residues 97–119 (SHPAACLAAVLAISLFILWAVGG). Topologically, residues 120–122 (AFT) are extracellular. The chain crosses the membrane as a helical span at residues 123-140 (FLLSITAPVFLILLHASL). Residues 141-178 (RLRNLKNKIENKIESIGLKRTPMGLLLEALGQEQEAGS) lie on the Cytoplasmic side of the membrane.

The protein belongs to the PRA1 family. In terms of assembly, interacts with CCR5 and GDE1.

It localises to the endosome membrane. May be involved in ER/Golgi transport and vesicular traffic. Plays a proapoptotic role in cerulenin-induced neuroblastoma apoptosis. The chain is PRA1 family protein 2 (Praf2) from Mus musculus (Mouse).